The sequence spans 238 residues: MTRLSVNINKIATIRNARGGNNPDLLKVALDCERFGAEGITIHPRPDERHIRYQDAYDLKKIVTTEFNIEGNPEGEFIALVENIKPDQVTLVPDAVNAITSNAGWDTITHQSFLTEIISNFKKAGIRVSVFVDPVTAMVEGAAKAGADRVELYTEPYATSFHSNKEAAIKEYIEAAAAAKSLGLGINAGHDLDLFNLNYLKKNIPFLDEVSIGHALICDALYYGLENTIQLYLRELKK.

3-amino-2-oxopropyl phosphate is bound by residues N7 and R18. H43 (proton acceptor) is an active-site residue. Positions 45 and 50 each coordinate 1-deoxy-D-xylulose 5-phosphate. The active-site Proton acceptor is E70. Residue T100 coordinates 1-deoxy-D-xylulose 5-phosphate. Residue H190 is the Proton donor of the active site. 3-amino-2-oxopropyl phosphate contacts are provided by residues D191 and 213-214 (GH).

This sequence belongs to the PNP synthase family. As to quaternary structure, homooctamer; tetramer of dimers.

The protein localises to the cytoplasm. It catalyses the reaction 3-amino-2-oxopropyl phosphate + 1-deoxy-D-xylulose 5-phosphate = pyridoxine 5'-phosphate + phosphate + 2 H2O + H(+). The protein operates within cofactor biosynthesis; pyridoxine 5'-phosphate biosynthesis; pyridoxine 5'-phosphate from D-erythrose 4-phosphate: step 5/5. In terms of biological role, catalyzes the complicated ring closure reaction between the two acyclic compounds 1-deoxy-D-xylulose-5-phosphate (DXP) and 3-amino-2-oxopropyl phosphate (1-amino-acetone-3-phosphate or AAP) to form pyridoxine 5'-phosphate (PNP) and inorganic phosphate. This Cytophaga hutchinsonii (strain ATCC 33406 / DSM 1761 / CIP 103989 / NBRC 15051 / NCIMB 9469 / D465) protein is Pyridoxine 5'-phosphate synthase.